The primary structure comprises 218 residues: MPGLTIGDTIPDLEVDTTQGKIKLHHFCSDSWTILFSHPGDFTPVCTTELGKMAQYASEFNKRGVMLLGMSCDDLESHKEWIKDIEAHTPGAKVNYPIISDPKREIIKQLNMVDPDEKDSNGNLPSRALHIVGPDKKIKLSFLYPAQTGRNMDEVLRVVESLQKASKYKIATPANWKPGEPVVISPDVTNDQAKEMFPQGFKTADLPSKKEYLRFTNV.

One can recognise a Thioredoxin domain in the interval L4 to K164. The Cysteine sulfenic acid (-SOH) intermediate role is filled by C46. A Bipartite nuclear localization signal motif is present at residues K194–N217.

Belongs to the peroxiredoxin family. Prx6 subfamily.

The protein localises to the nucleus. Its subcellular location is the cytoplasm. It carries out the reaction a hydroperoxide + [thioredoxin]-dithiol = an alcohol + [thioredoxin]-disulfide + H2O. Its function is as follows. Thiol-specific peroxidase that catalyzes the reduction of hydrogen peroxide and organic hydroperoxides to water and alcohols, respectively. Seems to contribute to the inhibition of germination during stress. In Medicago truncatula (Barrel medic), this protein is 1-Cys peroxiredoxin.